We begin with the raw amino-acid sequence, 378 residues long: Cytochrome b (378 aa).

4 helical membrane-spanning segments follow: residues 33–53 (FGSL…FLAM), 77–98 (WMIR…FLHT), 113–133 (WNIG…GYVL), and 178–198 (FFTF…IHLL). Residues H83 and H97 each coordinate heme b. Heme b contacts are provided by H182 and H196. An a ubiquinone-binding site is contributed by H201. 4 helical membrane-spanning segments follow: residues 226 to 246 (TKDI…TLFT), 288 to 308 (LGGV…PATH), 320 to 340 (ITQI…WIGG), and 347 to 366 (FEAI…TLIP).

This sequence belongs to the cytochrome b family. In terms of assembly, the cytochrome bc1 complex contains 11 subunits: 3 respiratory subunits (MT-CYB, CYC1 and UQCRFS1), 2 core proteins (UQCRC1 and UQCRC2) and 6 low-molecular weight proteins (UQCRH/QCR6, UQCRB/QCR7, UQCRQ/QCR8, UQCR10/QCR9, UQCR11/QCR10 and a cleavage product of UQCRFS1). This cytochrome bc1 complex then forms a dimer. The cofactor is heme b.

Its subcellular location is the mitochondrion inner membrane. Its function is as follows. Component of the ubiquinol-cytochrome c reductase complex (complex III or cytochrome b-c1 complex) that is part of the mitochondrial respiratory chain. The b-c1 complex mediates electron transfer from ubiquinol to cytochrome c. Contributes to the generation of a proton gradient across the mitochondrial membrane that is then used for ATP synthesis. This chain is Cytochrome b (MT-CYB), found in Cebus albifrons (White-fronted capuchin).